Reading from the N-terminus, the 171-residue chain is Sec-independent protein translocase protein TatB (171 aa).

The chain crosses the membrane as a helical span at residues 1 to 21 (MFDIGFSELLLVFIIGLVVLG). The tract at residues 89–171 (AESMKRSYVA…APSPSSSDKP (83 aa)) is disordered. Basic and acidic residues predominate over residues 100 to 123 (DPEKASDEAHTIHNPVVKDNETAH). Residues 130–139 (AAQTQASSPE) show a composition bias toward polar residues.

The protein belongs to the TatB family. As to quaternary structure, the Tat system comprises two distinct complexes: a TatABC complex, containing multiple copies of TatA, TatB and TatC subunits, and a separate TatA complex, containing only TatA subunits. Substrates initially bind to the TatABC complex, which probably triggers association of the separate TatA complex to form the active translocon.

It is found in the cell inner membrane. Functionally, part of the twin-arginine translocation (Tat) system that transports large folded proteins containing a characteristic twin-arginine motif in their signal peptide across membranes. Together with TatC, TatB is part of a receptor directly interacting with Tat signal peptides. TatB may form an oligomeric binding site that transiently accommodates folded Tat precursor proteins before their translocation. The chain is Sec-independent protein translocase protein TatB from Escherichia coli O1:K1 / APEC.